A 152-amino-acid chain; its full sequence is UPF0266 membrane protein YobD (152 aa).

3 consecutive transmembrane segments (helical) span residues 6–26, 45–65, and 67–87; these read LVLI…QFIM, VDSV…VTSH, and AQMT…IFWI.

This sequence belongs to the UPF0266 family.

The protein resides in the cell inner membrane. The chain is UPF0266 membrane protein YobD from Salmonella newport (strain SL254).